The following is a 557-amino-acid chain: uncharacterized protein (557 aa).

The signal sequence occupies residues 1-30; it reads MAPRRRRHTRIAGLRVVGTATLVAATTLTA. Residue C31 is the site of N-palmitoyl cysteine attachment. The S-diacylglycerol cysteine moiety is linked to residue C31.

It to M.bovis Mb2616c and M.leprae ML0489.

It is found in the cell membrane. This is an uncharacterized protein from Mycobacterium tuberculosis (strain CDC 1551 / Oshkosh).